A 451-amino-acid polypeptide reads, in one-letter code: tRNA modification GTPase MnmE (451 aa).

3 residues coordinate (6S)-5-formyl-5,6,7,8-tetrahydrofolate: arginine 28, glutamate 85, and lysine 124. The TrmE-type G domain occupies 220–373; it reads GLYTVLVGPP…LKTRLRTLLL (154 aa). Asparagine 230 lines the K(+) pocket. GTP contacts are provided by residues 230 to 235, 249 to 255, and 274 to 277; these read NVGKSS, TDVPGTT, and DTAG. Serine 234 is a binding site for Mg(2+). K(+) is bound by residues threonine 249, valine 251, and threonine 254. Mg(2+) is bound at residue threonine 255. (6S)-5-formyl-5,6,7,8-tetrahydrofolate is bound at residue lysine 451.

The protein belongs to the TRAFAC class TrmE-Era-EngA-EngB-Septin-like GTPase superfamily. TrmE GTPase family. As to quaternary structure, homodimer. Heterotetramer of two MnmE and two MnmG subunits. The cofactor is K(+).

Its subcellular location is the cytoplasm. Its function is as follows. Exhibits a very high intrinsic GTPase hydrolysis rate. Involved in the addition of a carboxymethylaminomethyl (cmnm) group at the wobble position (U34) of certain tRNAs, forming tRNA-cmnm(5)s(2)U34. In Xylella fastidiosa (strain 9a5c), this protein is tRNA modification GTPase MnmE.